The chain runs to 83 residues: UPF0457 protein YnzG (83 aa).

This sequence belongs to the UPF0457 family.

This Bacillus subtilis (strain 168) protein is UPF0457 protein YnzG (ynzG).